The following is a 584-amino-acid chain: MFS-type transporter gkaD (584 aa).

Low complexity predominate over residues 1–11; it reads MAVDTETTTTT. A disordered region spans residues 1–60; the sequence is MAVDTETTTTTIPVTDSDRIDDQNNLTSNAIPHASEKTVPDSPASEQNEVSDESEDKPSK. N-linked (GlcNAc...) asparagine glycosylation is present at N25. A run of 8 helical transmembrane segments spans residues 65–85, 99–119, 134–154, 167–187, 196–216, 223–243, 262–282, and 293–313; these read FGFY…SLEA, LGGA…QTAF, WPMI…GGSK, GIGS…LLPL, MIVS…GLIV, WVFY…FFFL, WIGN…LSWA, and VVVP…YEGS. A glycan (N-linked (GlcNAc...) asparagine) is linked at N328. 6 helical membrane passes run 334 to 354, 369 to 389, 398 to 418, 425 to 445, 462 to 482, and 536 to 556; these read AFAV…FLPV, VQLL…GTLL, LQHG…LLDA, WVGY…VLLP, TWSF…TAVF, and LNVV…LVFL.

The protein belongs to the major facilitator superfamily.

The protein localises to the membrane. In terms of biological role, MFS-type transporter; part of the gene cluster that mediates the biosynthesis of GKK1032, fungal natural products containing a macrocyclic para-cyclophane connected to a decahydrofluorene ring system that show potent antitumor activities. This chain is MFS-type transporter gkaD, found in Penicillium citrinum.